The sequence spans 468 residues: V-type proton ATPase subunit S1 (468 aa).

Residues 1–35 form the signal peptide; that stretch reads MMAATAAAQVRAGTRWAPALCRMPWLPLMLVAAAA. The propeptide occupies 36-228; that stretch reads ATSEQQVPLV…TAVRPSRVAR (193 aa). At 36–417 the chain is on the lumenal side; sequence ATSEQQVPLV…KKFSYASDCA (382 aa). N-linked (GlcNAc...) asparagine glycans are attached at residues asparagine 167, asparagine 258, asparagine 271, asparagine 294, asparagine 301, asparagine 348, asparagine 355, and asparagine 404. Cysteine 369 and cysteine 416 are disulfide-bonded. A helical membrane pass occupies residues 418-438; it reads GFFSPGIWMGLLTSLFMLFIF. At 439–468 the chain is on the cytoplasmic side; sequence TYGLHMILSLKTMDRFDDHKGPTITLTQIV.

The protein belongs to the vacuolar ATPase subunit S1 family. In terms of assembly, accessory component of the multisubunit proton-transporting vacuolar (V)-ATPase protein pump. Interacts (via N-terminus) with ATP6AP2 (via N-terminus). Interacts with RNASEK. Interacts with TMEM106B (via C-terminus). In terms of processing, N-glycosylated.

The protein resides in the endoplasmic reticulum membrane. Its subcellular location is the endoplasmic reticulum-Golgi intermediate compartment membrane. It localises to the cytoplasmic vesicle. It is found in the secretory vesicle. The protein localises to the synaptic vesicle membrane. The protein resides in the clathrin-coated vesicle membrane. Accessory subunit of the proton-transporting vacuolar (V)-ATPase protein pump, which is required for luminal acidification of secretory vesicles. Guides the V-type ATPase into specialized subcellular compartments, such as neuroendocrine regulated secretory vesicles or the ruffled border of the osteoclast, thereby regulating its activity. Involved in membrane trafficking and Ca(2+)-dependent membrane fusion. May play a role in the assembly of the V-type ATPase complex. In aerobic conditions, involved in intracellular iron homeostasis, thus triggering the activity of Fe(2+) prolyl hydroxylase (PHD) enzymes, and leading to HIF1A hydroxylation and subsequent proteasomal degradation. In islets of Langerhans cells, may regulate the acidification of dense-core secretory granules. This is V-type proton ATPase subunit S1 (ATP6AP1) from Bos taurus (Bovine).